The chain runs to 307 residues: tRNA pseudouridine synthase B (307 aa).

Asp47 serves as the catalytic Nucleophile.

The protein belongs to the pseudouridine synthase TruB family. Type 1 subfamily.

It carries out the reaction uridine(55) in tRNA = pseudouridine(55) in tRNA. Its function is as follows. Responsible for synthesis of pseudouridine from uracil-55 in the psi GC loop of transfer RNAs. The chain is tRNA pseudouridine synthase B from Chromohalobacter salexigens (strain ATCC BAA-138 / DSM 3043 / CIP 106854 / NCIMB 13768 / 1H11).